We begin with the raw amino-acid sequence, 178 residues long: Large ribosomal subunit protein uL6 (178 aa).

This sequence belongs to the universal ribosomal protein uL6 family. As to quaternary structure, part of the 50S ribosomal subunit.

Its function is as follows. This protein binds to the 23S rRNA, and is important in its secondary structure. It is located near the subunit interface in the base of the L7/L12 stalk, and near the tRNA binding site of the peptidyltransferase center. The protein is Large ribosomal subunit protein uL6 of Streptococcus pyogenes serotype M3 (strain ATCC BAA-595 / MGAS315).